Reading from the N-terminus, the 1108-residue chain is MAPTLLQKLFNKRGGGAASAQARPPKEEPAFSWSCSEFGLSDIRLLVYQDCERRGRQVMFDSRAVQKMEEAAAQKAEDVPIKMSARCCQESSSSSGSSSSGSSSSHGFGGSLQHAKQQLPKYQYTRPASDVSMLGEMMFGSVAMSYKGSTLKIHYIRSPPQLMISKVFSATMGSFCGSTNNLQDSFEYINQDPQAGKLNTNQYNLGPFRTGSNLAHSTPVDMPSRGQNEDRDSGIARSASLSSLLITPFPSPSSSTSSSSSYQRRWLRSQTTSLENGIFPRRSTDETFSLAEETCSSNPAMVRRKKIAISIIFSLCEREAAQRDFQDFFFSHFPLFESHMNRLKGAIEKAMISCRKISESSLRVQFYVSRLMEALGEFRGTIWNLYSVPRIAEPVWLTMMSNTLEKNQLCQRFLKEFILLIEQVNKNQFFAALLTAVLTYHLAWVPTVMPVDHPPIKAFSEKRTSQSVNMLAKTHPYNPLWAQLGDLYGAIGSPVRLTRTVVIGKQKDLVQRILYVLTYFLRCSELQENQLSWSGNPSEDDQVINGSKIITALEKGEVEESEYVVVTVSSEPALVPPILPQGTAERRSPEPTVVAEISEGVNTSELGHKPEKNRCKRPEQNSEASSMGFQEAEPDSSWIPQGIFCEDKQNDQEATQDCSSSPPSCEVPRVRRRMDQQTLHSKLHGETLKKRAEQSAAWPCPDRHSQEDPPVEKVTFHIGSSISPESDFESRTKRMEERLKACGHFHGASASASSSMDTGLTQEQQGSGCSFKADFEKDITPQDHSSGGEGVSEDRGLRANMTHAVGQLSQVDGPLAHSLCAAESGRRLLEQTRDVQLKGYKGPSSEPVPNRCRQQGGLLIAADVPYGDASGKGNYRSEGDIPRNESLDSALGDSDDEACVLALLELGHSCDRTEESLEVELPLPRSQSTSKANVRNFGRSLLAGYCATYMPDLVLHGTSSDEKLKQCLAADLVHTVHHPVLDEPIAEAVCIIADTDKWTVQVATSQRKVTDTMKLGQDVLVSSQVSSLLQSILQLYKLHLPADFCIMHLEDRLQEMYLKSKMLSEYLRGHTRVHVKELSVVLGIESNDLPLLTAIASTHSPYVAQILL.

The 419-residue stretch at 38 to 456 (FGLSDIRLLV…TVMPVDHPPI (419 aa)) folds into the uDENN FNIP1/2-type domain. Disordered stretches follow at residues 89 to 112 (QESS…GGSL), 209 to 233 (RTGS…DRDS), 598 to 635 (SEGV…AEPD), and 649 to 671 (QNDQ…PRVR). Residues 91 to 106 (SSSSSGSSSSGSSSSH) show a composition bias toward low complexity. Serine 212 and serine 217 each carry phosphoserine. The cDENN FNIP1/2-type domain occupies 464 to 1034 (TSQSVNMLAK…VSSLLQSILQ (571 aa)). The tract at residues 540 to 905 (DDQVINGSKI…DEACVLALLE (366 aa)) is interaction with PRKAA1. A compositionally biased stretch (basic and acidic residues) spans 606–620 (LGHKPEKNRCKRPEQ). Polar residues predominate over residues 652-663 (QEATQDCSSSPP). Phosphoserine is present on residues serine 720, serine 721, and serine 723. The region spanning 1044–1099 (FCIMHLEDRLQEMYLKSKMLSEYLRGHTRVHVKELSVVLGIESNDLPLLTAIASTH) is the dDENN FNIP1/2-type domain.

The protein belongs to the FNIP family. Homodimer and homomultimer. Heterodimer and heteromultimer with FNIP1. Interacts (via C-terminus) with FLCN (via C-terminus). Phosphorylated FLCN is preferentially bound. Component of the lysosomal folliculin complex (LFC), composed of FLCN, FNIP1 (or FNIP2), RagA/RRAGA or RagB/RRAGB GDP-bound, RagC/RRAGC or RagD/RRAGD GTP-bound, and Ragulator. Interacts with PRKAA1, PRKAB1 and PRKAG1 subunits of 5'-AMP-activated protein kinase. Interacts with HSP70, HSP90AA1, STIP1, PTGES3, CDC37, BRAF, GCR and CDK4. Phosphorylated by AMPK.

The protein localises to the lysosome membrane. The protein resides in the cytoplasm. Functionally, binding partner of the GTPase-activating protein FLCN: involved in the cellular response to amino acid availability by regulating the non-canonical mTORC1 signaling cascade controlling the MiT/TFE factors TFEB and TFE3. Required to promote FLCN recruitment to lysosomes and interaction with Rag GTPases, leading to activation of the non-canonical mTORC1 signaling. In low-amino acid conditions, component of the lysosomal folliculin complex (LFC) on the membrane of lysosomes, which inhibits the GTPase-activating activity of FLCN, thereby inactivating mTORC1 and promoting nuclear translocation of TFEB and TFE3. Upon amino acid restimulation, disassembly of the LFC complex liberates the GTPase-activating activity of FLCN, leading to activation of mTORC1 and subsequent inactivation of TFEB and TFE3. Together with FLCN, regulates autophagy: following phosphorylation by ULK1, interacts with GABARAP and promotes autophagy. In addition to its role in mTORC1 signaling, also acts as a co-chaperone of HSP90AA1/Hsp90: inhibits the ATPase activity of HSP90AA1/Hsp90, leading to activate both kinase and non-kinase client proteins of HSP90AA1/Hsp90. Acts as a scaffold to load client protein FLCN onto HSP90AA1/Hsp90. Competes with the activating co-chaperone AHSA1 for binding to HSP90AA1, thereby providing a reciprocal regulatory mechanism for chaperoning of client proteins. May play a role in the signal transduction pathway of apoptosis induced by O6-methylguanine-mispaired lesions. The chain is Folliculin-interacting protein 2 from Mus musculus (Mouse).